The chain runs to 539 residues: Chaperonin GroEL (539 aa).

ATP-binding positions include 29 to 32 (TLGP), 86 to 90 (DGTTT), G413, and D492.

This sequence belongs to the chaperonin (HSP60) family. As to quaternary structure, forms a cylinder of 14 subunits composed of two heptameric rings stacked back-to-back. Interacts with the co-chaperonin GroES.

Its subcellular location is the cytoplasm. It catalyses the reaction ATP + H2O + a folded polypeptide = ADP + phosphate + an unfolded polypeptide.. Its function is as follows. Together with its co-chaperonin GroES, plays an essential role in assisting protein folding. The GroEL-GroES system forms a nano-cage that allows encapsulation of the non-native substrate proteins and provides a physical environment optimized to promote and accelerate protein folding. The sequence is that of Chaperonin GroEL from Fusobacterium nucleatum subsp. nucleatum (strain ATCC 25586 / DSM 15643 / BCRC 10681 / CIP 101130 / JCM 8532 / KCTC 2640 / LMG 13131 / VPI 4355).